We begin with the raw amino-acid sequence, 281 residues long: Bifunctional protein FolD (281 aa).

NADP(+) contacts are provided by residues G165–G167, T192, and V233.

This sequence belongs to the tetrahydrofolate dehydrogenase/cyclohydrolase family. In terms of assembly, homodimer.

It catalyses the reaction (6R)-5,10-methylene-5,6,7,8-tetrahydrofolate + NADP(+) = (6R)-5,10-methenyltetrahydrofolate + NADPH. The enzyme catalyses (6R)-5,10-methenyltetrahydrofolate + H2O = (6R)-10-formyltetrahydrofolate + H(+). It functions in the pathway one-carbon metabolism; tetrahydrofolate interconversion. Its function is as follows. Catalyzes the oxidation of 5,10-methylenetetrahydrofolate to 5,10-methenyltetrahydrofolate and then the hydrolysis of 5,10-methenyltetrahydrofolate to 10-formyltetrahydrofolate. The polypeptide is Bifunctional protein FolD (Mycobacteroides abscessus (strain ATCC 19977 / DSM 44196 / CCUG 20993 / CIP 104536 / JCM 13569 / NCTC 13031 / TMC 1543 / L948) (Mycobacterium abscessus)).